Here is a 389-residue protein sequence, read N- to C-terminus: Spore coat polysaccharide biosynthesis protein SpsC (389 aa).

The residue at position 187 (K187) is an N6-(pyridoxal phosphate)lysine.

This sequence belongs to the DegT/DnrJ/EryC1 family. The cofactor is pyridoxal 5'-phosphate.

It functions in the pathway spore coat biogenesis; spore coat polysaccharide biosynthesis. This is Spore coat polysaccharide biosynthesis protein SpsC (spsC) from Bacillus subtilis (strain 168).